Reading from the N-terminus, the 2804-residue chain is Nipped-B-like protein (2804 aa).

Polar residues-rich tracts occupy residues 128-173 (LSQN…QNSP) and 191-208 (HPSSYTTHPQMQQASVSS). The tract at residues 128-340 (LSQNSMHSSP…LGKDEKEQSE (213 aa)) is disordered. Ser150 and Ser162 each carry phosphoserine. The span at 234–249 (HHADNPRHGSSEDYLH) shows a compositional bias: basic and acidic residues. 8 positions are modified to phosphoserine: Ser243, Ser256, Ser274, Ser280, Ser284, Ser301, Ser306, and Ser318. Positions 331-340 (LGKDEKEQSE) are enriched in basic and acidic residues. At Ser350 the chain carries Phosphoserine. The segment covering 482-500 (RESAIERERFSKEVQDKDK) has biased composition (basic and acidic residues). Residues 482–946 (RESAIERERF…NKAEFPSYLL (465 aa)) are disordered. Residues 523–534 (PASQETGSTGNG) show a composition bias toward polar residues. Composition is skewed to basic and acidic residues over residues 562–572 (DSIKKPEEIKQ), 593–663 (PENH…ECKQ), 672–685 (KQNENRLSDTKPND), and 694–939 (ETTK…DNKA). 2 positions are modified to phosphothreonine: Thr713 and Thr746. Ser912 is modified (phosphoserine). The short motif at 996–1009 (NKGAKPVVVLQKLS) is the PxVxL motif element. 2 disordered regions span residues 1017-1047 (IKDREDKSRSSLKPIKNKPSKSNKGSIDQSV) and 1060-1191 (ESTM…LTPE). Lys1082 carries the post-translational modification N6-acetyllysine. Ser1089, Ser1090, and Ser1096 each carry phosphoserine. Positions 1089-1100 (SSDEDNDSDEAF) are enriched in acidic residues. Residues 1109–1139 (KDDDKAWEYEERDRRSSGDHRRSGHSHEGRR) show a composition bias toward basic and acidic residues. 3 positions are modified to phosphoserine: Ser1150, Ser1152, and Ser1154. At Tyr1159 the chain carries Phosphotyrosine. Ser1160 is modified (phosphoserine). The segment covering 1171–1182 (KMKKKEKQKKRK) has biased composition (basic residues). The residue at position 1189 (Thr1189) is a Phosphothreonine. Ser1197 is subject to Phosphoserine. The disordered stretch occupies residues 1691–1710 (AMKSQKDEESSEGTHHAKEI). 5 HEAT repeats span residues 1767-1805 (AQSFDIYLTQILRVLGENAIAVRTKAMKCLSEVVAVDPS), 1843-1881 (PQLAEQYYDMLIERILDTGISVRKRVIKILRDICIEQPT), 1945-1984 (YDWFEQLLQNLLKSEEDSSYKPVKKACTQLVDNLVEHILK), 2227-2267 (VNLK…LKEM), and 2313-2351 (LIHPVQCVPYLIAMGTDPEPAMRNKADQQLVEIDKKYAG). Positions 2473-2489 (VKDKRKERKSSPSKENE) are enriched in basic and acidic residues. Disordered stretches follow at residues 2473–2520 (VKDK…DDIN) and 2651–2696 (TSLL…DSTE). A phosphoserine mark is found at Ser2493, Ser2509, Ser2511, Ser2513, Ser2515, Ser2652, and Ser2658. Positions 2510-2519 (DSDSDSEDDI) are enriched in acidic residues. At Thr2667 the chain carries Phosphothreonine. At Ser2672 the chain carries Phosphoserine.

It belongs to the SCC2/Nipped-B family. Heterodimerizes with MAU2/SCC4 to form the cohesin loading complex. The NIPBL-MAU2 heterodimer interacts with the cohesin complex composed of SMC1A/B and SMC3 heterodimer, RAD21 and STAG1/SA1. NIPBL directly contacts all members of the complex, RAD21, SMC1A/B, SMC3 and STAG1. Interacts directly (via PxVxL motif) with CBX5. Interacts with ZNF609 (via N-terminus). Interacts with the multiprotein complex Integrator. Interacts (via PxVxL motif) with CBX3. Interacts with BRD4. In terms of tissue distribution, widely expressed. Highly expressed in heart, skeletal muscle, fetal and adult liver, fetal and adult kidney. Expressed at intermediates level in thymus, placenta, peripheral leukocyte and small intestine. Weakly or not expressed in brain, colon, spleen and lung.

Its subcellular location is the nucleus. It is found in the chromosome. Plays an important role in the loading of the cohesin complex on to DNA. Forms a heterodimeric complex (also known as cohesin loading complex) with MAU2/SCC4 which mediates the loading of the cohesin complex onto chromatin. Plays a role in cohesin loading at sites of DNA damage. Its recruitment to double-strand breaks (DSBs) sites occurs in a CBX3-, RNF8- and RNF168-dependent manner whereas its recruitment to UV irradiation-induced DNA damage sites occurs in a ATM-, ATR-, RNF8- and RNF168-dependent manner. Along with ZNF609, promotes cortical neuron migration during brain development by regulating the transcription of crucial genes in this process. Preferentially binds promoters containing paused RNA polymerase II. Up-regulates the expression of SEMA3A, NRP1, PLXND1 and GABBR2 genes, among others. In Homo sapiens (Human), this protein is Nipped-B-like protein (NIPBL).